Reading from the N-terminus, the 819-residue chain is Leucine--tRNA ligase (819 aa).

A 'HIGH' region motif is present at residues 36–46 (PYPSGKIHMGH). Residues 586–590 (KMSKS) carry the 'KMSKS' region motif. Residue Lys589 participates in ATP binding.

It belongs to the class-I aminoacyl-tRNA synthetase family.

Its subcellular location is the cytoplasm. The catalysed reaction is tRNA(Leu) + L-leucine + ATP = L-leucyl-tRNA(Leu) + AMP + diphosphate. The polypeptide is Leucine--tRNA ligase (Wolbachia pipientis subsp. Culex pipiens (strain wPip)).